A 232-amino-acid chain; its full sequence is Acetate--CoA ligase [ADP-forming] I subunit beta (232 aa).

Residues 27 to 63 (KEILKLYGIPVPEFKVARNEEEAVKFSGEIGYPVVMK) enclose the ATP-grasp domain. An ATP-binding site is contributed by 53-64 (SGEIGYPVVMKI).

This sequence belongs to the acetate CoA ligase beta subunit family. Heterotetramer of two alpha and two beta subunits.

The protein resides in the cytoplasm. The catalysed reaction is acetate + ATP + CoA = acetyl-CoA + ADP + phosphate. Its activity is regulated as follows. Activity is dependent on magnesium. In terms of biological role, catalyzes the reversible formation of acetate and ATP from acetyl-CoA by using ADP and phosphate. Can use other substrates such as isobutyryl-CoA, propionyl-CoA and butyryl-CoA, but not indoleacetyl-CoA, phenylacetyl-CoA or succinyl-CoA. Seems to be involved primarily in the conversion of acetyl-CoA to acetate. Participates in the degradation of branched-chain amino acids via branched-chain-acyl-CoA esters. This Pyrococcus furiosus (strain ATCC 43587 / DSM 3638 / JCM 8422 / Vc1) protein is Acetate--CoA ligase [ADP-forming] I subunit beta.